A 223-amino-acid chain; its full sequence is Thiamine-phosphate synthase (223 aa).

4-amino-2-methyl-5-(diphosphooxymethyl)pyrimidine is bound by residues 45–49 (QYREK) and Asn77. Positions 78 and 97 each coordinate Mg(2+). Residue Thr116 coordinates 4-amino-2-methyl-5-(diphosphooxymethyl)pyrimidine. 142–144 (SYT) is a binding site for 2-[(2R,5Z)-2-carboxy-4-methylthiazol-5(2H)-ylidene]ethyl phosphate. Lys145 serves as a coordination point for 4-amino-2-methyl-5-(diphosphooxymethyl)pyrimidine. Residues Gly173 and 193 to 194 (VT) contribute to the 2-[(2R,5Z)-2-carboxy-4-methylthiazol-5(2H)-ylidene]ethyl phosphate site.

The protein belongs to the thiamine-phosphate synthase family. Mg(2+) is required as a cofactor.

The catalysed reaction is 2-[(2R,5Z)-2-carboxy-4-methylthiazol-5(2H)-ylidene]ethyl phosphate + 4-amino-2-methyl-5-(diphosphooxymethyl)pyrimidine + 2 H(+) = thiamine phosphate + CO2 + diphosphate. The enzyme catalyses 2-(2-carboxy-4-methylthiazol-5-yl)ethyl phosphate + 4-amino-2-methyl-5-(diphosphooxymethyl)pyrimidine + 2 H(+) = thiamine phosphate + CO2 + diphosphate. It catalyses the reaction 4-methyl-5-(2-phosphooxyethyl)-thiazole + 4-amino-2-methyl-5-(diphosphooxymethyl)pyrimidine + H(+) = thiamine phosphate + diphosphate. It functions in the pathway cofactor biosynthesis; thiamine diphosphate biosynthesis; thiamine phosphate from 4-amino-2-methyl-5-diphosphomethylpyrimidine and 4-methyl-5-(2-phosphoethyl)-thiazole: step 1/1. Functionally, condenses 4-methyl-5-(beta-hydroxyethyl)thiazole monophosphate (THZ-P) and 2-methyl-4-amino-5-hydroxymethyl pyrimidine pyrophosphate (HMP-PP) to form thiamine monophosphate (TMP). The protein is Thiamine-phosphate synthase of Dictyoglomus turgidum (strain DSM 6724 / Z-1310).